Here is a 120-residue protein sequence, read N- to C-terminus: Large ribosomal subunit protein uL18 (120 aa).

This sequence belongs to the universal ribosomal protein uL18 family. In terms of assembly, part of the 50S ribosomal subunit; part of the 5S rRNA/L5/L18/L25 subcomplex. Contacts the 5S and 23S rRNAs.

Functionally, this is one of the proteins that bind and probably mediate the attachment of the 5S RNA into the large ribosomal subunit, where it forms part of the central protuberance. In Nitrobacter hamburgensis (strain DSM 10229 / NCIMB 13809 / X14), this protein is Large ribosomal subunit protein uL18.